The following is a 260-amino-acid chain: RxLR effector protein BLR38 (260 aa).

Residues 1–18 form the signal peptide; sequence MHCTVFFLLIACAKSSYG. The RxLR signature appears at 46-49; the sequence is RLLR. The Nuclear localuization signal (NLS) motif lies at 136-148; sequence MPSSRKRPRALDE.

Belongs to the RxLR effector family.

It is found in the secreted. It localises to the host nucleus. Its function is as follows. Secreted effector that triggers a robust hypersensitive response (HR) in Lactuca serriola LS102. The response to BLN06 was visible as strong necrosis. Although effector recognition is frequently associated with single dominant R gene loci, the recognition of BLR38 requires 2 unlinked loci that display incomplete dominance. The chain is RxLR effector protein BLR38 from Bremia lactucae (Lettuce downy mildew).